The primary structure comprises 272 residues: GTP cyclohydrolase FolE2 (272 aa).

It belongs to the GTP cyclohydrolase IV family.

It catalyses the reaction GTP + H2O = 7,8-dihydroneopterin 3'-triphosphate + formate + H(+). The protein operates within cofactor biosynthesis; 7,8-dihydroneopterin triphosphate biosynthesis; 7,8-dihydroneopterin triphosphate from GTP: step 1/1. Converts GTP to 7,8-dihydroneopterin triphosphate. In Polynucleobacter asymbioticus (strain DSM 18221 / CIP 109841 / QLW-P1DMWA-1) (Polynucleobacter necessarius subsp. asymbioticus), this protein is GTP cyclohydrolase FolE2.